The primary structure comprises 77 residues: MSTIEERVKKVVAERLNVKEEDIQNTSSFTEDLGADSLDTVELVMALEEEFDTEIPDEEAEKITTVQEAIDYVVAHQ.

The region spanning 2–77 (STIEERVKKV…EAIDYVVAHQ (76 aa)) is the Carrier domain. Serine 37 is modified (O-(pantetheine 4'-phosphoryl)serine).

It belongs to the acyl carrier protein (ACP) family. Post-translationally, 4'-phosphopantetheine is transferred from CoA to a specific serine of apo-ACP by AcpS. This modification is essential for activity because fatty acids are bound in thioester linkage to the sulfhydryl of the prosthetic group.

It is found in the cytoplasm. Its pathway is lipid metabolism; fatty acid biosynthesis. Functionally, carrier of the growing fatty acid chain in fatty acid biosynthesis. In Chromohalobacter salexigens (strain ATCC BAA-138 / DSM 3043 / CIP 106854 / NCIMB 13768 / 1H11), this protein is Acyl carrier protein.